A 442-amino-acid chain; its full sequence is Cation channel sperm-associated protein 4 (442 aa).

Over 1-66 (MSEKHKWWQQ…TQMYIKQLLR (66 aa)) the chain is Cytoplasmic. Residues 67–88 (HPAFQLLLAFLLLSNAITIALR) traverse the membrane as a helical segment. At 89 to 98 (TNSYLGQKHY) the chain is on the extracellular side. A helical transmembrane segment spans residues 99-125 (ELFSTIDDIVLTILICEVLLGWLNGFW). Over 126–129 (IFWK) the chain is Cytoplasmic. Residues 130-153 (DGWNILNFAIVFILFMGFFIKQLD) traverse the membrane as a helical segment. Over 154-156 (MVA) the chain is Extracellular. Residues 157–175 (ITYPLRVLRLVHVCMAVEP) form a helical membrane-spanning segment. The Cytoplasmic segment spans residues 176–188 (LARIIKVILQSMP). A helical membrane pass occupies residues 189–212 (DLANVMALILFFMLVFSVFGVTLF). At 213 to 222 (GAFVPKHFQN) the chain is on the extracellular side. The segment at residues 223 to 234 (MGVALYTLFICI) is an intramembrane region (helical; Pore-forming). Residues 235-255 (TQDGWLDIYTDFQMDEREYAM) are Extracellular-facing. Residues 256–283 (EVGGAIYFAVFITLGAFIGLNLFVVVVT) form a helical membrane-spanning segment. Residues 284 to 442 (TNLEQMMKTG…NMVNKHKFSH (159 aa)) lie on the Cytoplasmic side of the membrane.

Belongs to the cation channel sperm-associated (TC 1.A.1.19) family. In terms of assembly, component of the CatSper complex or CatSpermasome composed of the core pore-forming members CATSPER1, CATSPER2, CATSPER3 and CATSPER4 as well as auxiliary members CATSPERB, CATSPERG2, CATSPERD, CATSPERE, CATSPERZ, C2CD6/CATSPERT, SLCO6C1, TMEM249, TMEM262 and EFCAB9. HSPA1 may be an additional auxiliary complex member. The core complex members CATSPER1, CATSPER2, CATSPER3 and CATSPER4 form a heterotetrameric channel. The auxiliary CATSPERB, CATSPERG2, CATSPERD and CATSPERE subunits form a pavilion-like structure over the pore which stabilizes the complex through interactions with CATSPER4, CATSPER3, CATSPER1 and CATSPER2 respectively. SLCO6C1 interacts with CATSPERE and TMEM262/CATSPERH interacts with CATSPERB, further stabilizing the complex. C2CD6/CATSPERT interacts at least with CATSPERD and is required for targeting the CatSper complex in the flagellar membrane. Testis-specific.

It localises to the cell projection. Its subcellular location is the cilium. It is found in the flagellum membrane. The enzyme catalyses Ca(2+)(in) = Ca(2+)(out). In contrast to the human ortholog, not activated by progesterone. Activated by intracellular alkalinization. Pore-forming subunit of the CatSper complex, a sperm-specific voltage-gated calcium channel that plays a central role in sperm cell hyperactivation. Controls calcium entry to mediate the hyperactivated motility, a step needed for sperm motility which is essential late in the preparation of sperm for fertilization. This chain is Cation channel sperm-associated protein 4 (Catsper4), found in Mus musculus (Mouse).